The sequence spans 446 residues: Rhamnogalacturonase A (446 aa).

The signal sequence occupies residues 1 to 18 (MPALPILALALAPLLVNG). Cysteine 39 and cysteine 65 are oxidised to a cystine. N-linked (GlcNAc...) asparagine glycosylation is found at asparagine 50, asparagine 115, and asparagine 124. Aspartate 216 acts as the Proton donor in catalysis. Cysteines 218 and 235 form a disulfide. N-linked (GlcNAc...) asparagine glycosylation is found at asparagine 236, asparagine 281, and asparagine 318. 2 cysteine pairs are disulfide-bonded: cysteine 341/cysteine 347 and cysteine 369/cysteine 378.

The protein belongs to the glycosyl hydrolase 28 family.

It is found in the secreted. The catalysed reaction is Endohydrolysis of alpha-D-GalA-(1-&gt;2)-alpha-L-Rha glycosidic bond in the rhamnogalacturonan I backbone with initial inversion of anomeric configuration releasing oligosaccharides with beta-D-GalA at the reducing end.. In terms of biological role, pectinolytic enzymes consist of four classes of enzymes: pectine lyase, polygalacturonase, pectin methylesterase and rhamnogalacturonase. Hydrolyzes alpha-D-galacturonopyranosyl-(1,2)-alpha-L-rhamnopyranosyl linkages in the backbone of the hairy regions of pectins. The protein is Rhamnogalacturonase A (rhgA) of Aspergillus niger.